We begin with the raw amino-acid sequence, 311 residues long: Cytosolic Fe-S cluster assembly factor Nubp1 homolog (311 aa).

Residues Cys9, Cys23, Cys26, and Cys32 each coordinate [4Fe-4S] cluster. An ATP-binding site is contributed by 63–70 (GKGGVGKS). Cys241 and Cys244 together coordinate [4Fe-4S] cluster.

This sequence belongs to the Mrp/NBP35 ATP-binding proteins family. NUBP1/NBP35 subfamily. Heterotetramer of 2 Nubp1 and 2 Nubp2 chains. The cofactor is [4Fe-4S] cluster.

The protein resides in the cytoplasm. In terms of biological role, component of the cytosolic iron-sulfur (Fe/S) protein assembly (CIA) machinery. Required for maturation of extramitochondrial Fe-S proteins. The Nubp1-Nubp2 heterotetramer forms a Fe-S scaffold complex, mediating the de novo assembly of an Fe-S cluster and its transfer to target apoproteins. This Drosophila grimshawi (Hawaiian fruit fly) protein is Cytosolic Fe-S cluster assembly factor Nubp1 homolog.